A 480-amino-acid chain; its full sequence is Glutamate--tRNA ligase (480 aa).

Positions 9–19 match the 'HIGH' region motif; that stretch reads PSPTGDPHVGT. The 'KMSKS' region signature appears at 253–257; that stretch reads KISKR. Lys256 serves as a coordination point for ATP.

The protein belongs to the class-I aminoacyl-tRNA synthetase family. Glutamate--tRNA ligase type 1 subfamily. Monomer.

The protein localises to the cytoplasm. It catalyses the reaction tRNA(Glu) + L-glutamate + ATP = L-glutamyl-tRNA(Glu) + AMP + diphosphate. Its function is as follows. Catalyzes the attachment of glutamate to tRNA(Glu) in a two-step reaction: glutamate is first activated by ATP to form Glu-AMP and then transferred to the acceptor end of tRNA(Glu). This Deinococcus geothermalis (strain DSM 11300 / CIP 105573 / AG-3a) protein is Glutamate--tRNA ligase.